Consider the following 424-residue polypeptide: Probable threonylcarbamoyladenosine tRNA methylthiotransferase (424 aa).

Residues 1-106 (MRVAIETYGC…VVDAVYSALN (106 aa)) enclose the MTTase N-terminal domain. [4Fe-4S] cluster contacts are provided by C10, C44, C73, C143, C147, and C150. One can recognise a Radical SAM core domain in the interval 129–359 (LRENAIAIVS…TDLMRKIGLE (231 aa)). One can recognise a TRAM domain in the interval 362–420 (KRFVGKKLRVLVTKEGKNGRNLARMNSYRAVVTEGAVGEFVEVKIKDCRFNYLIGQLAA).

It belongs to the methylthiotransferase family. CDKAL1 subfamily. The cofactor is [4Fe-4S] cluster.

The catalysed reaction is N(6)-L-threonylcarbamoyladenosine(37) in tRNA + (sulfur carrier)-SH + AH2 + 2 S-adenosyl-L-methionine = 2-methylsulfanyl-N(6)-L-threonylcarbamoyladenosine(37) in tRNA + (sulfur carrier)-H + 5'-deoxyadenosine + L-methionine + A + S-adenosyl-L-homocysteine + 2 H(+). Functionally, catalyzes the methylthiolation of N6-threonylcarbamoyladenosine (t(6)A), leading to the formation of 2-methylthio-N6-threonylcarbamoyladenosine (ms(2)t(6)A) at position 37 in tRNAs that read codons beginning with adenine. This is Probable threonylcarbamoyladenosine tRNA methylthiotransferase from Archaeoglobus fulgidus (strain ATCC 49558 / DSM 4304 / JCM 9628 / NBRC 100126 / VC-16).